The primary structure comprises 274 residues: Serine/threonine-protein kinase 1 (274 aa).

The region spanning 17–265 (ARTALHLVNG…YEVIQKNTYW (249 aa)) is the Protein kinase domain. ATP contacts are provided by residues 23–31 (LVNGKFGKV) and Lys46. Asp133 serves as the catalytic Proton acceptor.

The protein belongs to the protein kinase superfamily. Ser/Thr protein kinase family.

It carries out the reaction L-seryl-[protein] + ATP = O-phospho-L-seryl-[protein] + ADP + H(+). The catalysed reaction is L-threonyl-[protein] + ATP = O-phospho-L-threonyl-[protein] + ADP + H(+). Its function is as follows. In vitro, can phosphorylate histone H1. The chain is Serine/threonine-protein kinase 1 (PK1) from Lymantria dispar multicapsid nuclear polyhedrosis virus (LdMNPV).